The chain runs to 110 residues: Large ribosomal subunit protein uL22 (110 aa).

The span at 84 to 95 (ARGTASKIRKPT) shows a compositional bias: basic residues. The segment at 84-110 (ARGTASKIRKPTSHVMVEVSKPEKKEA) is disordered.

This sequence belongs to the universal ribosomal protein uL22 family. Part of the 50S ribosomal subunit.

In terms of biological role, this protein binds specifically to 23S rRNA; its binding is stimulated by other ribosomal proteins, e.g. L4, L17, and L20. It is important during the early stages of 50S assembly. It makes multiple contacts with different domains of the 23S rRNA in the assembled 50S subunit and ribosome. Its function is as follows. The globular domain of the protein is located near the polypeptide exit tunnel on the outside of the subunit, while an extended beta-hairpin is found that lines the wall of the exit tunnel in the center of the 70S ribosome. This is Large ribosomal subunit protein uL22 from Campylobacter concisus (strain 13826).